A 466-amino-acid chain; its full sequence is Cysteine--tRNA ligase (466 aa).

Residue Cys29 participates in Zn(2+) binding. Residues 31–41 (PTVYDFAHIGN) carry the 'HIGH' region motif. Residues Cys210, His235, and Glu239 each coordinate Zn(2+). The 'KMSKS' region motif lies at 267–271 (KMSKS). Residue Lys270 participates in ATP binding.

It belongs to the class-I aminoacyl-tRNA synthetase family. As to quaternary structure, monomer. The cofactor is Zn(2+).

The protein resides in the cytoplasm. It catalyses the reaction tRNA(Cys) + L-cysteine + ATP = L-cysteinyl-tRNA(Cys) + AMP + diphosphate. The chain is Cysteine--tRNA ligase from Solibacter usitatus (strain Ellin6076).